The chain runs to 283 residues: ATP phosphoribosyltransferase (283 aa).

It belongs to the ATP phosphoribosyltransferase family. Long subfamily. Mg(2+) serves as cofactor.

Its subcellular location is the cytoplasm. It catalyses the reaction 1-(5-phospho-beta-D-ribosyl)-ATP + diphosphate = 5-phospho-alpha-D-ribose 1-diphosphate + ATP. It functions in the pathway amino-acid biosynthesis; L-histidine biosynthesis; L-histidine from 5-phospho-alpha-D-ribose 1-diphosphate: step 1/9. Its activity is regulated as follows. Feedback inhibited by histidine. In terms of biological role, catalyzes the condensation of ATP and 5-phosphoribose 1-diphosphate to form N'-(5'-phosphoribosyl)-ATP (PR-ATP). Has a crucial role in the pathway because the rate of histidine biosynthesis seems to be controlled primarily by regulation of HisG enzymatic activity. In Ignicoccus hospitalis (strain KIN4/I / DSM 18386 / JCM 14125), this protein is ATP phosphoribosyltransferase.